The sequence spans 206 residues: MVEEETITVEGDYETLIPIDEYLAAGVHIGTQQKTSDMMKYIYRVRTDGLYVLDVQATDKRIRLAGKFLANYEPSKILVVSARQYGQRPATMFAKAVGARANVGRFIPNTLTNPHFAGYIEPDVLLVTDPAGDGQAVKEAVDIGIPVVALCDTNNMTSNVDLVIPTNNKGRKALTLIYWLLARQVLRERGEEDRFKYTVSDFEMEF.

This sequence belongs to the universal ribosomal protein uS2 family.

In Methanothrix thermoacetophila (strain DSM 6194 / JCM 14653 / NBRC 101360 / PT) (Methanosaeta thermophila), this protein is Small ribosomal subunit protein uS2.